We begin with the raw amino-acid sequence, 143 residues long: uncharacterized protein (143 aa).

One can recognise an HTH marR-type domain in the interval Asp5–Ala137. The H-T-H motif DNA-binding region spans Pro51–Asp74.

In terms of assembly, homodimer.

This is an uncharacterized protein from Mycobacterium bovis (strain ATCC BAA-935 / AF2122/97).